A 517-amino-acid chain; its full sequence is Crotonobetaine/carnitine--CoA ligase (517 aa).

This sequence belongs to the ATP-dependent AMP-binding enzyme family.

The catalysed reaction is 4-(trimethylamino)butanoate + ATP + CoA = 4-(trimethylamino)butanoyl-CoA + AMP + diphosphate. It catalyses the reaction crotonobetaine + ATP + CoA = crotonobetainyl-CoA + AMP + diphosphate. The enzyme catalyses (R)-carnitine + ATP + CoA = (R)-carnitinyl-CoA + AMP + diphosphate. Its pathway is amine and polyamine metabolism; carnitine metabolism. Functionally, catalyzes the transfer of CoA to carnitine, generating the initial carnitinyl-CoA needed for the CaiB reaction cycle. Also has activity toward crotonobetaine and gamma-butyrobetaine. In Escherichia coli O17:K52:H18 (strain UMN026 / ExPEC), this protein is Crotonobetaine/carnitine--CoA ligase.